We begin with the raw amino-acid sequence, 20 residues long: Dermaseptin-N1 (20 aa).

A Leucine amide modification is found at Leu20.

In terms of tissue distribution, expressed by the skin glands.

The protein resides in the secreted. Antimicrobial peptide with moderate activity against both Gram-positive and Gram-negative bacteria, and important activity against Leishmania species (L.amazonensis and L.infantum). Acts on both Leishmania promastigote and amastigote forms. Shows activity against E.coli (MIC=17.8 uM), S.aureus (MIC=32.3 uM) and the phytopathogenic bacterium Xanthomonas axonopodis (MIC=2 uM). Shows low cytotoxicity against mammalian cells in models of peritoneal macrophages. In Pithecopus nordestinus (Northeastern Brazilian leaf frog), this protein is Dermaseptin-N1.